Consider the following 221-residue polypeptide: Glutathione peroxidase 6 (221 aa).

The first 19 residues, methionine 1–alanine 19, serve as a signal peptide directing secretion. Cysteine 73 is a catalytic residue.

Belongs to the glutathione peroxidase family.

The protein resides in the secreted. It carries out the reaction 2 glutathione + H2O2 = glutathione disulfide + 2 H2O. The sequence is that of Glutathione peroxidase 6 (Gpx6) from Mus musculus (Mouse).